A 613-amino-acid chain; its full sequence is Methionine--tRNA ligase (613 aa).

Positions Pro15–His25 match the 'HIGH' region motif. Cys147, Cys150, Cys160, and Cys163 together coordinate Zn(2+). A 'KMSKS' region motif is present at residues Lys351–Ser355. Ser354 provides a ligand contact to ATP.

Belongs to the class-I aminoacyl-tRNA synthetase family. MetG type 1 subfamily. Monomer. Zn(2+) is required as a cofactor.

It localises to the cytoplasm. The enzyme catalyses tRNA(Met) + L-methionine + ATP = L-methionyl-tRNA(Met) + AMP + diphosphate. Its function is as follows. Is required not only for elongation of protein synthesis but also for the initiation of all mRNA translation through initiator tRNA(fMet) aminoacylation. This is Methionine--tRNA ligase from Corynebacterium efficiens (strain DSM 44549 / YS-314 / AJ 12310 / JCM 11189 / NBRC 100395).